The chain runs to 80 residues: Cytochrome c oxidase subunit 7B, mitochondrial (80 aa).

The N-terminal 24 residues, 1 to 24 (MLPLAKNALSRLQVRSIQQVVARQ), are a transit peptide targeting the mitochondrion. Over 25–32 (SHQKKTPT) the chain is Mitochondrial matrix. The chain crosses the membrane as a helical span at residues 33-59 (FHDKYGNAVLAGGSIFCISAWTYTATQ). The Mitochondrial intermembrane segment spans residues 60–80 (IGIEWNLSPVGRVTPKEWRDQ).

The protein belongs to the cytochrome c oxidase VIIb family. Component of the cytochrome c oxidase (complex IV, CIV), a multisubunit enzyme composed of 14 subunits. The complex is composed of a catalytic core of 3 subunits MT-CO1, MT-CO2 and MT-CO3, encoded in the mitochondrial DNA, and 11 supernumerary subunits COX4I, COX5A, COX5B, COX6A, COX6B, COX6C, COX7A, COX7B, COX7C, COX8 and NDUFA4, which are encoded in the nuclear genome. The complex exists as a monomer or a dimer and forms supercomplexes (SCs) in the inner mitochondrial membrane with NADH-ubiquinone oxidoreductase (complex I, CI) and ubiquinol-cytochrome c oxidoreductase (cytochrome b-c1 complex, complex III, CIII), resulting in different assemblies (supercomplex SCI(1)III(2)IV(1) and megacomplex MCI(2)III(2)IV(2)).

Its subcellular location is the mitochondrion inner membrane. The protein operates within energy metabolism; oxidative phosphorylation. Component of the cytochrome c oxidase, the last enzyme in the mitochondrial electron transport chain which drives oxidative phosphorylation. The respiratory chain contains 3 multisubunit complexes succinate dehydrogenase (complex II, CII), ubiquinol-cytochrome c oxidoreductase (cytochrome b-c1 complex, complex III, CIII) and cytochrome c oxidase (complex IV, CIV), that cooperate to transfer electrons derived from NADH and succinate to molecular oxygen, creating an electrochemical gradient over the inner membrane that drives transmembrane transport and the ATP synthase. Cytochrome c oxidase is the component of the respiratory chain that catalyzes the reduction of oxygen to water. Electrons originating from reduced cytochrome c in the intermembrane space (IMS) are transferred via the dinuclear copper A center (CU(A)) of subunit 2 and heme A of subunit 1 to the active site in subunit 1, a binuclear center (BNC) formed by heme A3 and copper B (CU(B)). The BNC reduces molecular oxygen to 2 water molecules using 4 electrons from cytochrome c in the IMS and 4 protons from the mitochondrial matrix. Plays a role in proper central nervous system (CNS) development in vertebrates. The polypeptide is Cytochrome c oxidase subunit 7B, mitochondrial (Cox7b) (Rattus norvegicus (Rat)).